A 133-amino-acid polypeptide reads, in one-letter code: MDVIHLFLATLLVSLCFLTAYSHLSPEEKPKDDRSLRNNSSMNLLDSPSVSIMALNKKSKKISRKEAEKKKRSSKKKASMTKVARPRLLQPAPCVATRDSCKPPAPACCDPCASCQCRFFRSACSCRVLTRTC.

Positions 1–22 (MDVIHLFLATLLVSLCFLTAYS) are cleaved as a signal peptide. The segment covering 26-36 (PEEKPKDDRSL) has biased composition (basic and acidic residues). A disordered region spans residues 26–83 (PEEKPKDDRSLRNNSSMNLLDSPSVSIMALNKKSKKISRKEAEKKKRSSKKKASMTKV). Positions 37-50 (RNNSSMNLLDSPSV) are enriched in polar residues. Residues N38 and N39 are each glycosylated (N-linked (GlcNAc...) asparagine). Positions 70–79 (KKRSSKKKAS) are enriched in basic residues. Disulfide bonds link C94-C109, C101-C115, C108-C126, C112-C133, and C117-C124. The region spanning 94–133 (CVATRDSCKPPAPACCDPCASCQCRFFRSACSCRVLTRTC) is the Agouti domain.

The protein resides in the secreted. Involved in the regulation of melanogenesis. The binding of ASP to MC1R precludes alpha-MSH initiated signaling and thus blocks production of cAMP, leading to a down-regulation of eumelanogenesis (brown/black pigment) and thus increasing synthesis of pheomelanin (yellow/red pigment). This is Agouti-signaling protein (ASIP) from Equus caballus (Horse).